We begin with the raw amino-acid sequence, 360 residues long: Peptide chain release factor 1 (360 aa).

Q237 bears the N5-methylglutamine mark.

This sequence belongs to the prokaryotic/mitochondrial release factor family. Methylated by PrmC. Methylation increases the termination efficiency of RF1.

Its subcellular location is the cytoplasm. Functionally, peptide chain release factor 1 directs the termination of translation in response to the peptide chain termination codons UAG and UAA. This Pseudomonas savastanoi pv. phaseolicola (strain 1448A / Race 6) (Pseudomonas syringae pv. phaseolicola (strain 1448A / Race 6)) protein is Peptide chain release factor 1.